The following is a 594-amino-acid chain: Apolipoprotein N-acyltransferase (594 aa).

The segment covering 1–29 (MIPAVTDDDPLEDPLDDDVAPGLDDAEPE) has biased composition (acidic residues). A disordered region spans residues 1 to 48 (MIPAVTDDDPLEDPLDDDVAPGLDDAEPEPEPRDEHDEPSRPATGSRI). Residues 1 to 67 (MIPAVTDDDP…RFGKGVLDRC (67 aa)) lie on the Cytoplasmic side of the membrane. Positions 30-40 (PEPRDEHDEPS) are enriched in basic and acidic residues. The helical transmembrane segment at 68 to 87 (APLSAAIGGGLALWLSFPPI) threads the bilayer. Residues 88–116 (GWWFTAFPGLALLGWVLTRTATTKAGGFG) lie on the Extracellular side of the membrane. A helical membrane pass occupies residues 117–134 (YGVLFGLAFYVPLLPWIS). Over 135-138 (GLVG) the chain is Cytoplasmic. Residues 139-160 (AVPWLALAFAESLFCGLFGLGA) traverse the membrane as a helical segment. The Extracellular portion of the chain corresponds to 161–221 (VVVVRLPGWP…IGGAPLVSFA (61 aa)). The helical transmembrane segment at 222–239 (VALIGFSLTLLTAQIVWW) threads the bilayer. Over 240 to 251 (WRHGHKPGVPAP) the chain is Cytoplasmic. Residues 252–269 (AVMLPGVAIAASLLVTAL) traverse the membrane as a helical segment. Residues 270–554 (VWPQVRQSGT…TDLTPATKWG (285 aa)) lie on the Extracellular side of the membrane. Positions 287 to 543 (VTVAAVQGNV…PAYLDNQIRL (257 aa)) constitute a CN hydrolase domain. Glu340 acts as the Proton acceptor in catalysis. Lys405 is a catalytic residue. Residue Cys455 is the Nucleophile of the active site. The chain crosses the membrane as a helical span at residues 555-572 (PIVQAVLVIAGVAVLLIA). Over 573–594 (ILHNGRFAPRMLRRRSATTVKR) the chain is Cytoplasmic.

Belongs to the CN hydrolase family. Apolipoprotein N-acyltransferase subfamily. Interacts with Ppm1 (AC A0QZ12) upon coexpression in E.coli, which increases the PPM synthase activity of Ppm1.

It is found in the cell membrane. It carries out the reaction N-terminal S-1,2-diacyl-sn-glyceryl-L-cysteinyl-[lipoprotein] + a glycerophospholipid = N-acyl-S-1,2-diacyl-sn-glyceryl-L-cysteinyl-[lipoprotein] + a 2-acyl-sn-glycero-3-phospholipid + H(+). The protein operates within protein modification; lipoprotein biosynthesis (N-acyl transfer). Functionally, catalyzes the phospholipid dependent N-acylation of the N-terminal cysteine of apolipoprotein, the last step in lipoprotein maturation. Can transfer a number of fatty acids (C16 and C19, palmitic and probably tuberculostearic acids respectively are shown). Enhances the polyprenol monophosphomannose (PPM) synthase activity of Ppm1 (AC A0QZ12) without itself having PPM synthase catalytic activity. The chain is Apolipoprotein N-acyltransferase from Mycolicibacterium smegmatis (strain ATCC 700084 / mc(2)155) (Mycobacterium smegmatis).